The following is a 200-amino-acid chain: Small ribosomal subunit protein uS4 (200 aa).

The S4 RNA-binding domain maps to 92-155; the sequence is SRLDAVVYSL…QKLNVIVESV (64 aa).

It belongs to the universal ribosomal protein uS4 family. Part of the 30S ribosomal subunit. Contacts protein S5. The interaction surface between S4 and S5 is involved in control of translational fidelity.

In terms of biological role, one of the primary rRNA binding proteins, it binds directly to 16S rRNA where it nucleates assembly of the body of the 30S subunit. Functionally, with S5 and S12 plays an important role in translational accuracy. The chain is Small ribosomal subunit protein uS4 from Staphylococcus aureus (strain MRSA252).